The primary structure comprises 553 residues: Protein PALS2 (553 aa).

L27 domains lie at 1–48 (MQQV…EDSK) and 49–107 (LEAV…YDSP). The region spanning 129–208 (ILGIHKKAGE…SVTLKILPSY (80 aa)) is the PDZ domain. The SH3 domain maps to 228–297 (VRQVFVKCHF…PSQFLEEKRK (70 aa)). The region spanning 351-538 (RKTLVLIGAQ…AFEKLQTAIE (188 aa)) is the Guanylate kinase-like domain. At Y513 the chain carries Phosphotyrosine.

It belongs to the MAGUK family. In terms of assembly, interacts with CADM1. Interacts with the LIN7 proteins.

The protein localises to the membrane. This is Protein PALS2 from Mus musculus (Mouse).